The chain runs to 487 residues: Fibroblast growth factor receptor-like 1 (487 aa).

Positions 1 to 18 (MGLQLALLLAGIVALSDS) are cleaved as a signal peptide. Topologically, residues 19 to 371 (ARGPPRIADK…PSSVSSLPWP (353 aa)) are extracellular. One can recognise an Ig-like C2-type 1 domain in the interval 23–109 (PRIADKVIHR…GSTNVNYTLI (87 aa)). A disulfide bridge links C45 with C93. N105 carries N-linked (GlcNAc...) asparagine glycosylation. The span at 115–125 (SSGKNSQTPEG) shows a compositional bias: polar residues. The segment at 115 to 147 (SSGKNSQTPEGSNGEYEDHSGKQWAQPRFTQPA) is disordered. 2 Ig-like C2-type domains span residues 141-231 (PRFT…YKVE) and 240-348 (PILT…AFLT). Cysteines 166 and 215 form a disulfide. Residues N225, N249, and N287 are each glycosylated (N-linked (GlcNAc...) asparagine). Residues C262 and C332 are joined by a disulfide bond. A helical membrane pass occupies residues 372–392 (VIIGIPAGAVFIFGTILLWLC). Topologically, residues 393-487 (QTKKKPCSPP…HQHQHIQYQC (95 aa)) are cytoplasmic.

In terms of assembly, interacts with heparin and FGF2. As to expression, expressed in cartilaginous structures.

The protein localises to the cell membrane. Has a negative effect on cell proliferation. This Gallus gallus (Chicken) protein is Fibroblast growth factor receptor-like 1 (FGFRL1).